Consider the following 143-residue polypeptide: Large ribosomal subunit protein uL11 (143 aa).

This sequence belongs to the universal ribosomal protein uL11 family. Part of the ribosomal stalk of the 50S ribosomal subunit. Interacts with L10 and the large rRNA to form the base of the stalk. L10 forms an elongated spine to which L12 dimers bind in a sequential fashion forming a multimeric L10(L12)X complex. In terms of processing, one or more lysine residues are methylated.

Its function is as follows. Forms part of the ribosomal stalk which helps the ribosome interact with GTP-bound translation factors. The protein is Large ribosomal subunit protein uL11 of Burkholderia multivorans (strain ATCC 17616 / 249).